The chain runs to 417 residues: Cobalamin binding intrinsic factor (417 aa).

An N-terminal signal peptide occupies residues 1–18; sequence MAWLSFYLLNVLWAVAGT. Disulfide bonds link cysteine 26-cysteine 246, cysteine 103-cysteine 288, and cysteine 143-cysteine 182. Aspartate 171 lines the cob(II)alamin pocket. Serine 191 bears the Phosphoserine mark. The N-linked (GlcNAc...) asparagine glycan is linked to asparagine 209. Residues aspartate 222 and glutamine 270 each coordinate cob(II)alamin. Asparagine 311 and asparagine 330 each carry an N-linked (GlcNAc...) asparagine glycan. Cob(II)alamin contacts are provided by residues 365–370 and 386–395; these read SWGLIV and WEFLSGKTPL. A glycan (N-linked (GlcNAc...) asparagine) is linked at asparagine 413.

This sequence belongs to the eukaryotic cobalamin transport proteins family. As to quaternary structure, interacts with CUBN (via CUB domains). The N-terminus is blocked. Gastric mucosa.

Its subcellular location is the secreted. In terms of biological role, promotes absorption of the essential vitamin cobalamin (Cbl) in the ileum. After interaction with CUBN, the CBLIF-cobalamin complex is internalized via receptor-mediated endocytosis. This is Cobalamin binding intrinsic factor from Rattus norvegicus (Rat).